Consider the following 155-residue polypeptide: Aspartate carbamoyltransferase regulatory chain (155 aa).

Zn(2+) is bound by residues Cys113, Cys118, Cys139, and Cys142.

Belongs to the PyrI family. In terms of assembly, contains catalytic and regulatory chains. It depends on Zn(2+) as a cofactor.

In terms of biological role, involved in allosteric regulation of aspartate carbamoyltransferase. The protein is Aspartate carbamoyltransferase regulatory chain of Methanospirillum hungatei JF-1 (strain ATCC 27890 / DSM 864 / NBRC 100397 / JF-1).